A 306-amino-acid polypeptide reads, in one-letter code: tRNA pseudouridine synthase B (306 aa).

Asp-47 serves as the catalytic Nucleophile.

The protein belongs to the pseudouridine synthase TruB family. Type 1 subfamily.

The catalysed reaction is uridine(55) in tRNA = pseudouridine(55) in tRNA. In terms of biological role, responsible for synthesis of pseudouridine from uracil-55 in the psi GC loop of transfer RNAs. The protein is tRNA pseudouridine synthase B of Neisseria gonorrhoeae (strain NCCP11945).